The primary structure comprises 79 residues: Small ribosomal subunit protein bS18 (79 aa).

Belongs to the bacterial ribosomal protein bS18 family. In terms of assembly, part of the 30S ribosomal subunit. Forms a tight heterodimer with protein bS6.

Its function is as follows. Binds as a heterodimer with protein bS6 to the central domain of the 16S rRNA, where it helps stabilize the platform of the 30S subunit. The chain is Small ribosomal subunit protein bS18 from Nitrobacter hamburgensis (strain DSM 10229 / NCIMB 13809 / X14).